The primary structure comprises 109 residues: Staphostatin B (109 aa).

The binds to staphopain B stretch occupies residues 97-101 (IGTSR).

The protein belongs to the protease inhibitor I57 (SspC) family. In terms of assembly, forms a stable non-covalent complex with prematurely activated/folded SspB.

It is found in the cytoplasm. In terms of biological role, specifically inhibits the cysteine protease staphopain B (SspB) by blocking the active site of the enzyme. Probably required to protect cytoplasmic proteins from being degraded by prematurely activated/folded prostaphopain B. Also involved in growth capacity, viability and bacterial morphology. The sequence is that of Staphostatin B (sspC) from Staphylococcus aureus (strain NCTC 8325 / PS 47).